Consider the following 373-residue polypeptide: Cytoplasmic tRNA 2-thiolation protein 1 (373 aa).

It belongs to the TtcA family. CTU1/NCS6/ATPBD3 subfamily.

The protein resides in the cytoplasm. Its pathway is tRNA modification; 5-methoxycarbonylmethyl-2-thiouridine-tRNA biosynthesis. In terms of biological role, plays a central role in 2-thiolation of mcm(5)S(2)U at tRNA wobble positions of tRNA(Lys), tRNA(Glu) and tRNA(Gln). Directly binds tRNAs and probably acts by catalyzing adenylation of tRNAs, an intermediate required for 2-thiolation. It is unclear whether it acts as a sulfurtransferase that transfers sulfur from thiocarboxylated URM1 onto the uridine of tRNAs at wobble position. The protein is Cytoplasmic tRNA 2-thiolation protein 1 of Caenorhabditis elegans.